Reading from the N-terminus, the 270-residue chain is Putative hydro-lyase Reut_A2449 (270 aa).

The protein belongs to the D-glutamate cyclase family.

The polypeptide is Putative hydro-lyase Reut_A2449 (Cupriavidus pinatubonensis (strain JMP 134 / LMG 1197) (Cupriavidus necator (strain JMP 134))).